The following is a 584-amino-acid chain: Arginine--tRNA ligase (584 aa).

Positions Pro127–His137 match the 'HIGH' region motif.

It belongs to the class-I aminoacyl-tRNA synthetase family. In terms of assembly, monomer.

The protein resides in the cytoplasm. The catalysed reaction is tRNA(Arg) + L-arginine + ATP = L-arginyl-tRNA(Arg) + AMP + diphosphate. The chain is Arginine--tRNA ligase from Alcanivorax borkumensis (strain ATCC 700651 / DSM 11573 / NCIMB 13689 / SK2).